Consider the following 856-residue polypeptide: Rod cGMP-specific 3',5'-cyclic phosphodiesterase subunit beta (856 aa).

N-acetylserine is present on Ser2. GAF domains follow at residues 71-220 (NMER…TLNL) and 252-429 (DIER…GWSV). The PDEase domain maps to 481-814 (EEDELGKILK…KEWKALADEY (334 aa)). His557 acts as the Proton donor in catalysis. Positions 561, 597, 598, and 718 each coordinate a divalent metal cation. The S-geranylgeranyl cysteine moiety is linked to residue Cys853. Positions 854 to 856 (CIL) are cleaved as a propeptide — removed in mature form.

It belongs to the cyclic nucleotide phosphodiesterase family. As to quaternary structure, oligomer composed of two catalytic chains (alpha and beta), an inhibitory chain (gamma) and the delta chain. A divalent metal cation serves as cofactor.

It is found in the membrane. The protein localises to the cell projection. The protein resides in the cilium. Its subcellular location is the photoreceptor outer segment. The catalysed reaction is 3',5'-cyclic GMP + H2O = GMP + H(+). In terms of biological role, rod-specific cGMP phosphodiesterase that catalyzes the hydrolysis of 3',5'-cyclic GMP. Necessary for the formation of a functional phosphodiesterase holoenzyme. Involved in retinal circadian rhythm photoentrainment via modulation of UVA and orange light-induced phase-shift of the retina clock. May participate in processes of transmission and amplification of the visual signal. In Mus musculus (Mouse), this protein is Rod cGMP-specific 3',5'-cyclic phosphodiesterase subunit beta.